The primary structure comprises 107 residues: Glutaredoxin-1 (107 aa).

Ala2 bears the N-acetylalanine mark. Positions 3–106 (QEFVNCKIQS…ARLKQIGALQ (104 aa)) constitute a Glutaredoxin domain. Lys9 is modified (N6-succinyllysine). 2 disulfide bridges follow: Cys23–Cys26 and Cys79–Cys83.

It belongs to the glutaredoxin family.

The protein resides in the cytoplasm. Its function is as follows. Has a glutathione-disulfide oxidoreductase activity in the presence of NADPH and glutathione reductase. Reduces low molecular weight disulfides and proteins. This chain is Glutaredoxin-1 (Glrx), found in Rattus norvegicus (Rat).